Reading from the N-terminus, the 856-residue chain is MRIGNKILVFIVGFCLPAVVLVSYCLGVWFDHRVELLRQDNVRHELANIQQQFRIDVDRLGFLTNIYASPLSHLDSEQLKSLESSWLESSMSGNLSWFILRDGNLQNVFQNEQPIAEANRQEIAKAITTQAKPEFASAYLIGDKGYVVTAVASHLGEYVLLVRQLTERDLLEYAQTSLVARVSMSNVVTAHHSSHSSSVALPSLISQQPIYLHVEFSDDPFRDVKLSLDWVSLAVILLGILIVALGYVWLRACLLQPFKSLMQQLALVDPMASVYRPVTSEGNEELSVLANRVNSLLARIYQQKERGKITLESIAEAVILTDIEAKVIYMNPKAETLLEVASSNAVGESLASLLKAGEQLNQAVFHCIRLGETMPQVAKIKLLTTMPRIIERSISNVLNHEKEIVGTVVVLRDITQEELLKHQLQKRANFDGITGLLNRQAFEEQLPEFASQARSLAVCYLDLEQFKLINDSCGHTAGDRMLAMVARAIQSCLGPQELLARIGGDEFGLVICDRTALAVAQLLKQIIAQVSLQVLHDKNCNYKVGLSIGVAFGRAPYINAQELLKDADIACIAAKAKGTNQIHIYDDKDKELTYQRNAPKWAVRIAQAIEENELLLYYQPIRGLGASSKRQRMEVLLRIQEPCGRILAPAQFIAAAERFKLMPEIDKEVIRKAFLWLSLNSQLWQDHCISINLSGNSLGAEGMVEYIAKQQQIFDIPSQCVCFEITETTAIQNRHRGMEMLRQLRKLGFSFALDDFGSGFASYGYLRELPVDYVKIDGCFVKNLAVNAKDYAIVKSIQDVCRVMGIETVAEFVENQEIIDRLQTIGINYAQGYAIGRPQPLASYCEQFETRLAQRA.

2 helical membrane passes run 7–27 (ILVFIVGFCLPAVVLVSYCLG) and 230–250 (WVSLAVILLGILIVALGYVWL). The PAS domain occupies 303 to 350 (QKERGKITLESIAEAVILTDIEAKVIYMNPKAETLLEVASSNAVGESL). The 134-residue stretch at 454–587 (RSLAVCYLDL…GTNQIHIYDD (134 aa)) folds into the GGDEF domain. Positions 598–852 (APKWAVRIAQ…SYCEQFETRL (255 aa)) constitute an EAL domain.

It localises to the cell membrane. It catalyses the reaction 3',3'-c-di-GMP + H2O = 5'-phosphoguanylyl(3'-&gt;5')guanosine + H(+). In terms of biological role, affects motility and biofilm formation, and is linked to the regulation of sulfate uptake and assimilation. This Shewanella oneidensis (strain ATCC 700550 / JCM 31522 / CIP 106686 / LMG 19005 / NCIMB 14063 / MR-1) protein is Cyclic di-GMP phosphodiesterase PdeB (pdeB).